Consider the following 597-residue polypeptide: Indole-3-acetic acid-amido synthetase GH3.4 (597 aa).

It belongs to the IAA-amido conjugating enzyme family.

Its function is as follows. Catalyzes the synthesis of indole-3-acetic acid (IAA)-amino acid conjugates, providing a mechanism for the plant to cope with the presence of excess auxin. Strongly reactive with Glu, Gln, Trp, Asp, Ala, Leu, Phe, Gly, Tyr, Met, Ile and Val. Little or no product formation with His, Ser, Thr, Arg, Lys, or Cys. Also active on pyruvic and butyric acid analogs of IAA, PAA and the synthetic auxin naphthaleneacetic acid (NAA). The two chlorinated synthetic auxin herbicides 2,4-D and 3,6-dichloro-o-anisic acid (dicamba) cannot be used as substrates. The polypeptide is Indole-3-acetic acid-amido synthetase GH3.4 (GH3.4) (Arabidopsis thaliana (Mouse-ear cress)).